We begin with the raw amino-acid sequence, 156 residues long: Small ribosomal subunit protein uS7 (156 aa).

This sequence belongs to the universal ribosomal protein uS7 family. As to quaternary structure, part of the 30S ribosomal subunit. Contacts proteins S9 and S11.

Functionally, one of the primary rRNA binding proteins, it binds directly to 16S rRNA where it nucleates assembly of the head domain of the 30S subunit. Is located at the subunit interface close to the decoding center, probably blocks exit of the E-site tRNA. This chain is Small ribosomal subunit protein uS7, found in Prochlorococcus marinus (strain NATL2A).